The sequence spans 352 residues: Molybdenum import ATP-binding protein ModC (352 aa).

An ABC transporter domain is found at 1-229; the sequence is MLQLDFHQQL…SALRPWLPKD (229 aa). ATP is bound at residue 31 to 38; it reads GVSGAGKT. A Mop domain is found at 289-352; it reads KSSIRNVLRA…AQIKSVSITA (64 aa).

It belongs to the ABC transporter superfamily. Molybdate importer (TC 3.A.1.8) family. The complex is composed of two ATP-binding proteins (ModC), two transmembrane proteins (ModB) and a solute-binding protein (ModA).

The protein localises to the cell inner membrane. The enzyme catalyses molybdate(out) + ATP + H2O = molybdate(in) + ADP + phosphate + H(+). In terms of biological role, part of the ABC transporter complex ModABC involved in molybdenum import. Responsible for energy coupling to the transport system. This Pectobacterium atrosepticum (strain SCRI 1043 / ATCC BAA-672) (Erwinia carotovora subsp. atroseptica) protein is Molybdenum import ATP-binding protein ModC.